The chain runs to 534 residues: CTP synthase (534 aa).

Residues 1–267 (MTKYIFVTGG…GDLIIERLAL (267 aa)) form an amidoligase domain region. CTP is bound at residue serine 13. UTP is bound at residue serine 13. 14 to 19 (SVGKGI) is a binding site for ATP. Tyrosine 54 contacts L-glutamine. Position 71 (aspartate 71) interacts with ATP. Mg(2+)-binding residues include aspartate 71 and glutamate 141. CTP contacts are provided by residues 148–150 (DIE), 188–193 (KTKPTQ), and lysine 224. UTP is bound by residues 188–193 (KTKPTQ) and lysine 224. Residues 292–534 (TVAIVGKYVE…VQAALEQIAE (243 aa)) form the Glutamine amidotransferase type-1 domain. Glycine 354 contributes to the L-glutamine binding site. Residue cysteine 381 is the Nucleophile; for glutamine hydrolysis of the active site. L-glutamine is bound by residues 382 to 385 (LGMQ), glutamate 405, and arginine 462. Active-site residues include histidine 507 and glutamate 509.

The protein belongs to the CTP synthase family. In terms of assembly, homotetramer.

The catalysed reaction is UTP + L-glutamine + ATP + H2O = CTP + L-glutamate + ADP + phosphate + 2 H(+). It catalyses the reaction L-glutamine + H2O = L-glutamate + NH4(+). It carries out the reaction UTP + NH4(+) + ATP = CTP + ADP + phosphate + 2 H(+). The protein operates within pyrimidine metabolism; CTP biosynthesis via de novo pathway; CTP from UDP: step 2/2. Its activity is regulated as follows. Allosterically activated by GTP, when glutamine is the substrate; GTP has no effect on the reaction when ammonia is the substrate. The allosteric effector GTP functions by stabilizing the protein conformation that binds the tetrahedral intermediate(s) formed during glutamine hydrolysis. Inhibited by the product CTP, via allosteric rather than competitive inhibition. In terms of biological role, catalyzes the ATP-dependent amination of UTP to CTP with either L-glutamine or ammonia as the source of nitrogen. Regulates intracellular CTP levels through interactions with the four ribonucleotide triphosphates. The protein is CTP synthase of Herpetosiphon aurantiacus (strain ATCC 23779 / DSM 785 / 114-95).